The sequence spans 621 residues: Kelch-like protein 40 (621 aa).

Positions 33–98 (LDCVVRVGER…LYTSEIALDE (66 aa)) constitute a BTB domain. A BACK domain is found at 133–239 (CLAVFRLGLL…PRAFLETRVE (107 aa)). The interval 265-298 (LTTLRKKKKEKGEQTARAKEANQGTEDTKAEDDE) is disordered. The segment covering 274–284 (EKGEQTARAKE) has biased composition (basic and acidic residues). 5 Kelch repeats span residues 360-412 (QVFV…EALN), 413-462 (AIYV…SHMD), 463-510 (LVYV…VHDG), 512-557 (IFVA…SLAG), and 559-613 (LYAL…PVRL).

This sequence belongs to the KLHL40 family. Component of the BCR(KLHL40) E3 ubiquitin ligase complex, at least composed of CUL3, KLHL40 and RBX1. Interacts with LMOD3. In terms of tissue distribution, specifically expressed in skeletal muscles in embryonic, neonatal and adults. Expressed in various types of muscles, including extensor digitorum longus, gastrocnemius, soleus, diaphragm, masseter and heart (at protein level). Not detected in brain, liver and lung (at protein level).

Its subcellular location is the cytoplasm. The protein resides in the myofibril. The protein localises to the sarcomere. It localises to the a band. It is found in the i band. Functionally, substrate-specific adapter of a BCR (BTB-CUL3-RBX1) E3 ubiquitin ligase complex that acts as a key regulator of skeletal muscle development. The BCR(KLHL40) complex acts by mediating ubiquitination and degradation of TFDP1, thereby regulating the activity of the E2F:DP transcription factor complex. Promotes stabilization of LMOD3 by acting as a negative regulator of LMOD3 ubiquitination; the molecular process by which it negatively regulates ubiquitination of LMOD3 is however unclear. This chain is Kelch-like protein 40, found in Mus musculus (Mouse).